The primary structure comprises 61 residues: Large ribosomal subunit protein bL32 (61 aa).

The protein belongs to the bacterial ribosomal protein bL32 family.

The sequence is that of Large ribosomal subunit protein bL32 from Ehrlichia chaffeensis (strain ATCC CRL-10679 / Arkansas).